The following is a 263-amino-acid chain: Reductase pytE (263 aa).

It belongs to the avfA family.

Its pathway is secondary metabolite biosynthesis. Reductase; part of the gene cluster that mediates the biosynthesis of pyranterreones, a family of antioxidative compounds. The first step of pyranonigrins biosynthesis is performed by the hybrid PKS-NRPS synthetase pytA that condenses 4 malonyl-CoA units ato the acetyl starter unit by the modular PKS of pytA. The acyl chain is then connected to an L-serine through the amide bond by the modular NRPS of pytA. A tetramic acid is formed and released from the PKS-NRPS pytA to give pyranterreone 5 with the help of the thioesterase pytI. Pyranterreone 5 could be methylated by pytC to afford pyranterreone 6. Both pyranterreones 5 and 6 are subsequently oxidized by the FAD-linked oxidoreductase pytB and the cytochrome P450 monooxygenase pytD to form the fused gamma-pyrone core, resulting in pyranterreones 7 and 11, respectively. The hydroxy group at C-8 of pyranterreones 7 and 11 are dehydrated by the aspartyl protease pytH to form a delta-7 double bond to give pyranterreones 3 and 1, 2 accordingly. The exo-methylene of pyranterreone 3 could be reduced into a pendant methyl by reductase pytE to provide pyranterreone 4, also known as cordylactam. Pyranterreone 4 can be reconverted to pyranterreone 3 through pytB-catalyzed dehydrogenation or further oxidized to pyranterreones 9 and 10. In Aspergillus terreus, this protein is Reductase pytE.